Reading from the N-terminus, the 202-residue chain is ATP-dependent Clp protease proteolytic subunit (202 aa).

Ser-98 functions as the Nucleophile in the catalytic mechanism. His-123 is an active-site residue.

The protein belongs to the peptidase S14 family. Fourteen ClpP subunits assemble into 2 heptameric rings which stack back to back to give a disk-like structure with a central cavity, resembling the structure of eukaryotic proteasomes.

The protein resides in the cytoplasm. It catalyses the reaction Hydrolysis of proteins to small peptides in the presence of ATP and magnesium. alpha-casein is the usual test substrate. In the absence of ATP, only oligopeptides shorter than five residues are hydrolyzed (such as succinyl-Leu-Tyr-|-NHMec, and Leu-Tyr-Leu-|-Tyr-Trp, in which cleavage of the -Tyr-|-Leu- and -Tyr-|-Trp bonds also occurs).. Cleaves peptides in various proteins in a process that requires ATP hydrolysis. Has a chymotrypsin-like activity. Plays a major role in the degradation of misfolded proteins. This Syntrophobacter fumaroxidans (strain DSM 10017 / MPOB) protein is ATP-dependent Clp protease proteolytic subunit.